Here is a 122-residue protein sequence, read N- to C-terminus: Large ribosomal subunit protein uL14 (122 aa).

It belongs to the universal ribosomal protein uL14 family. In terms of assembly, part of the 50S ribosomal subunit. Forms a cluster with proteins L3 and L19. In the 70S ribosome, L14 and L19 interact and together make contacts with the 16S rRNA in bridges B5 and B8.

Functionally, binds to 23S rRNA. Forms part of two intersubunit bridges in the 70S ribosome. This chain is Large ribosomal subunit protein uL14, found in Azoarcus sp. (strain BH72).